The sequence spans 669 residues: MPQLLLELLSEEIPARMQAQAARDLERLARERLAAEGLLPEALKTFAGPRRLTLVAEGLPAAQADRREELKGPKVGAPEQALEGFLRKTGLTRDQLVERDGVFFATIEKPGRPTPEIVAEMVEAILRTFPWPKSMVSGTSKLRWVRPLRRILCVFDGEVVPFEVDGIASGDLSEGHRFMSDGQPFLVKDFEGYAAGLSHRSVVLDADERKERILEAAKTLCFARNLELVEDAGLLDEVAGLVEWPVPVLGDMDPAFLDLPPEVIRTSMRVHQRYFAVRDPAGGKLAPHFLTVANIAARDGGATIAKGNAKVLSARLSDARFFWDEDRKVRLEDRLEKLKGVTFHAKLGTMYERVQRIEALAGELAPFVRDEPETRTKAVQAARLAKADLVSGVVGEFPELQGIMGGYYAEAEGLDPEVVDAIRSHYRPQGPNDAVPVSSVAATVALADKLDTLVSFFGIGEKPTGSRDPFALRRAALGVIRIVLETRTRLPLKRFVSDEVLDFFADRLAVLLREQGKRHDLVAAVFALGDDDLVRIVARVEVLSAFLKTEDGANLLAGYKRAVNILRAEEKKGPLPAGEPAQAAGAPAEEAALVQAVAALDARLGPALEREDFEGAMTELAKLRGPVDAFFDKVLVNSDVPAERENRLRLLAKVRDAMGRVADFSQVTG.

Belongs to the class-II aminoacyl-tRNA synthetase family. In terms of assembly, tetramer of two alpha and two beta subunits.

The protein localises to the cytoplasm. It carries out the reaction tRNA(Gly) + glycine + ATP = glycyl-tRNA(Gly) + AMP + diphosphate. In Phenylobacterium zucineum (strain HLK1), this protein is Glycine--tRNA ligase beta subunit.